Reading from the N-terminus, the 176-residue chain is O-acetyl-ADP-ribose deacetylase (176 aa).

Positions 1-175 (MSGRINVVQG…LYQRLLGQYD (175 aa)) constitute a Macro domain. Residues 11–12 (DI), Asn25, 33–35 (GVD), and 122–126 (STGIY) each bind substrate. The active-site Proton acceptor is the Asp35.

It belongs to the MacroD-type family. YmdB subfamily. In terms of assembly, homodimer. Interacts with RNase III.

The enzyme catalyses 3''-O-acetyl-ADP-D-ribose + H2O = ADP-D-ribose + acetate + H(+). It catalyses the reaction 2''-O-acetyl-ADP-D-ribose + H2O = ADP-D-ribose + acetate + H(+). In terms of biological role, deacetylates O-acetyl-ADP ribose to yield ADP-ribose and free acetate. Down-regulates ribonuclease 3 (RNase III) activity. Acts by interacting directly with the region of the ribonuclease that is required for dimerization/activation. The polypeptide is O-acetyl-ADP-ribose deacetylase (Cronobacter turicensis (strain DSM 18703 / CCUG 55852 / LMG 23827 / z3032)).